Consider the following 510-residue polypeptide: Probable cytosol aminopeptidase (510 aa).

Lys-282 and Asp-287 together coordinate Mn(2+). Lys-294 is a catalytic residue. Residues Asp-305, Asp-364, and Glu-366 each contribute to the Mn(2+) site. Arg-368 is a catalytic residue.

It belongs to the peptidase M17 family. It depends on Mn(2+) as a cofactor.

It localises to the cytoplasm. The catalysed reaction is Release of an N-terminal amino acid, Xaa-|-Yaa-, in which Xaa is preferably Leu, but may be other amino acids including Pro although not Arg or Lys, and Yaa may be Pro. Amino acid amides and methyl esters are also readily hydrolyzed, but rates on arylamides are exceedingly low.. It carries out the reaction Release of an N-terminal amino acid, preferentially leucine, but not glutamic or aspartic acids.. In terms of biological role, presumably involved in the processing and regular turnover of intracellular proteins. Catalyzes the removal of unsubstituted N-terminal amino acids from various peptides. The chain is Probable cytosol aminopeptidase from Cupriavidus pinatubonensis (strain JMP 134 / LMG 1197) (Cupriavidus necator (strain JMP 134)).